A 430-amino-acid chain; its full sequence is Glial fibrillary acidic protein (430 aa).

The segment at 1-31 is disordered; sequence MERRRITSARRSYASSETMVRGHGPTRHLGT. Positions 1–70 are head; the sequence is MERRRITSAR…KETRASERAE (70 aa). Thr-7 carries the phosphothreonine; by AURKB and ROCK1 modification. The span at 9–18 shows a compositional bias: polar residues; that stretch reads ARRSYASSET. Omega-N-methylarginine is present on Arg-11. At Ser-12 the chain carries Phosphoserine. Position 21 is an omega-N-methylarginine (Arg-21). At Arg-34 the chain carries Citrulline. Position 36 is a phosphoserine; by AURKB and ROCK1 (Ser-36). The residue at position 41 (Thr-41) is a Phosphothreonine. An IF rod domain is found at 67-375; that stretch reads ERAEMMELND…KLLEGEENRI (309 aa). Residues 71–102 form a coil 1A region; that stretch reads MMELNDRFASYIEKVRFLEQQNKALAAELNQL. Ser-80 carries the post-translational modification Phosphoserine. Residues 103–113 are linker 1; sequence RAKEPTKLADV. Residues Thr-108 and Thr-148 each carry the phosphothreonine modification. The tract at residues 114 to 212 is coil 1B; it reads YQAELRELRL…EEEVRELQEQ (99 aa). A linker 12 region spans residues 213–228; that stretch reads LAQQQVHVEMDVAKPD. Positions 229–250 are coil 2A; it reads LTAALREIRTQYEAVATSNMQE. The segment at 251-254 is linker 2; that stretch reads TEEW. Residues 255-375 are coil 2B; that stretch reads YRSKFADLTD…KLLEGEENRI (121 aa). Residue Ser-267 is modified to Phosphoserine. Arg-268 carries the post-translational modification Citrulline. Residue Ser-321 is modified to Phosphoserine. A tail region spans residues 376–430; sequence TIPVQTFSNLQIRETSLDTKSVSEGHLKRNIVVKTVEMRDGEVIKESKQEHKDVM. Thr-381 is subject to Phosphothreonine. Ser-383 bears the Phosphoserine mark. 2 positions are modified to citrulline: Arg-404 and Arg-414.

This sequence belongs to the intermediate filament family. As to quaternary structure, interacts with SYNM. Interacts with PSEN1 (via N-terminus). Post-translationally, phosphorylated by PKN1. In terms of tissue distribution, expressed in the cortex and hippocampus. Expression decreases following acute and chronic corticosterone treatment.

The protein localises to the cytoplasm. Functionally, GFAP, a class-III intermediate filament, is a cell-specific marker that, during the development of the central nervous system, distinguishes astrocytes from other glial cells. The sequence is that of Glial fibrillary acidic protein (Gfap) from Rattus norvegicus (Rat).